A 468-amino-acid chain; its full sequence is Ribosomal protein uS12 methylthiotransferase RimO (468 aa).

An MTTase N-terminal domain is found at 16–130; that stretch reads NKIHFISLGC…ILSAIESRES (115 aa). Residues Cys25, Cys61, Cys93, Cys164, Cys168, and Cys171 each contribute to the [4Fe-4S] cluster site. Residues 150 to 382 form the Radical SAM core domain; that stretch reads STPKHYAYLK…SQIQKRNVDK (233 aa). In terms of domain architecture, TRAM spans 385–455; the sequence is QKLIGEKIEA…GYDLVGRVVK (71 aa).

Belongs to the methylthiotransferase family. RimO subfamily. Requires [4Fe-4S] cluster as cofactor.

The protein localises to the cytoplasm. It carries out the reaction L-aspartate(89)-[ribosomal protein uS12]-hydrogen + (sulfur carrier)-SH + AH2 + 2 S-adenosyl-L-methionine = 3-methylsulfanyl-L-aspartate(89)-[ribosomal protein uS12]-hydrogen + (sulfur carrier)-H + 5'-deoxyadenosine + L-methionine + A + S-adenosyl-L-homocysteine + 2 H(+). In terms of biological role, catalyzes the methylthiolation of an aspartic acid residue of ribosomal protein uS12. The protein is Ribosomal protein uS12 methylthiotransferase RimO of Chlamydia pneumoniae (Chlamydophila pneumoniae).